The following is a 227-amino-acid chain: Uracil-DNA glycosylase (227 aa).

The Proton acceptor role is filled by aspartate 65.

Belongs to the uracil-DNA glycosylase (UDG) superfamily. UNG family.

It localises to the cytoplasm. The enzyme catalyses Hydrolyzes single-stranded DNA or mismatched double-stranded DNA and polynucleotides, releasing free uracil.. In terms of biological role, excises uracil residues from the DNA which can arise as a result of misincorporation of dUMP residues by DNA polymerase or due to deamination of cytosine. In Bacillus velezensis (strain DSM 23117 / BGSC 10A6 / LMG 26770 / FZB42) (Bacillus amyloliquefaciens subsp. plantarum), this protein is Uracil-DNA glycosylase.